The primary structure comprises 285 residues: Ribosomal RNA small subunit methyltransferase A (285 aa).

Residues N29, L31, G56, E77, D102, and N123 each contribute to the S-adenosyl-L-methionine site.

It belongs to the class I-like SAM-binding methyltransferase superfamily. rRNA adenine N(6)-methyltransferase family. RsmA subfamily.

It localises to the cytoplasm. It carries out the reaction adenosine(1518)/adenosine(1519) in 16S rRNA + 4 S-adenosyl-L-methionine = N(6)-dimethyladenosine(1518)/N(6)-dimethyladenosine(1519) in 16S rRNA + 4 S-adenosyl-L-homocysteine + 4 H(+). Its function is as follows. Specifically dimethylates two adjacent adenosines (A1518 and A1519) in the loop of a conserved hairpin near the 3'-end of 16S rRNA in the 30S particle. May play a critical role in biogenesis of 30S subunits. In Clostridium perfringens (strain ATCC 13124 / DSM 756 / JCM 1290 / NCIMB 6125 / NCTC 8237 / Type A), this protein is Ribosomal RNA small subunit methyltransferase A.